The following is a 91-amino-acid chain: Small ribosomal subunit protein bS16c (91 aa).

This sequence belongs to the bacterial ribosomal protein bS16 family.

Its subcellular location is the plastid. It is found in the chloroplast. The protein is Small ribosomal subunit protein bS16c of Vitis vinifera (Grape).